The primary structure comprises 1080 residues: Protein transport protein SEC24 C (1080 aa).

A compositionally biased stretch (pro residues) spans 1-10; the sequence is MVAPVPPGAP. 3 disordered regions span residues 1 to 189, 201 to 220, and 316 to 367; these read MVAP…SGMI, GSGG…TTPQ, and TAMG…SDYV. Positions 12–43 are enriched in polar residues; it reads PNSQQNSGPPNFYPGSQGNSNALADNMQNLSL. Residues 45-70 show a composition bias toward pro residues; it reads RPPPMMPGSGPRPPPPFGQSPQPFPQ. Composition is skewed to low complexity over residues 71 to 84, 142 to 160, and 178 to 189; these read QSPS…GPSP, PAAS…SVAA, and GSGMSMPPSGMI. The segment covering 340 to 356 has biased composition (polar residues); the sequence is GSSSSPTVFETRQSNQA. Residues Cys430, Cys433, Cys452, and Cys455 each contribute to the Zn(2+) site. Residues 430–455 form a zinc finger-like region; it reads CSRCKGYINPFMKFIDQGRKFICNFC.

Belongs to the SEC23/SEC24 family. SEC24 subfamily. As to quaternary structure, component of the coat protein complex II (COPII), composed of at least five proteins: the Sec23/24 complex, the Sec13/31 complex and Sar1. Mainly expressed at low levels in pollen, leaves, roots and stems.

The protein localises to the cytoplasmic vesicle. It localises to the COPII-coated vesicle membrane. It is found in the endoplasmic reticulum membrane. The protein resides in the golgi apparatus membrane. Component of the coat protein complex II (COPII), that covers ER-derived vesicles involved in transport from the endoplasmic reticulum to the Golgi apparatus. COPII is composed of at least five proteins: the SEC23/24 complex, the SEC13/31 complex, and the protein SAR1. Acts in the cytoplasm to promote the transport of secretory, plasma membrane, and vacuolar proteins from the endoplasmic reticulum to the Golgi complex. The polypeptide is Protein transport protein SEC24 C (Arabidopsis thaliana (Mouse-ear cress)).